A 213-amino-acid polypeptide reads, in one-letter code: Histidine biosynthesis bifunctional protein HisIE (213 aa).

Positions 1–114 (MLTTEKYQGL…FHPALTDFSF (114 aa)) are phosphoribosyl-AMP cyclohydrolase. The phosphoribosyl-ATP pyrophosphohydrolase stretch occupies residues 115-213 (LFQLENIISI…RVRSKLKKKH (99 aa)).

This sequence in the N-terminal section; belongs to the PRA-CH family. In the C-terminal section; belongs to the PRA-PH family.

It localises to the cytoplasm. The enzyme catalyses 1-(5-phospho-beta-D-ribosyl)-ATP + H2O = 1-(5-phospho-beta-D-ribosyl)-5'-AMP + diphosphate + H(+). The catalysed reaction is 1-(5-phospho-beta-D-ribosyl)-5'-AMP + H2O = 1-(5-phospho-beta-D-ribosyl)-5-[(5-phospho-beta-D-ribosylamino)methylideneamino]imidazole-4-carboxamide. Its pathway is amino-acid biosynthesis; L-histidine biosynthesis; L-histidine from 5-phospho-alpha-D-ribose 1-diphosphate: step 2/9. It functions in the pathway amino-acid biosynthesis; L-histidine biosynthesis; L-histidine from 5-phospho-alpha-D-ribose 1-diphosphate: step 3/9. This is Histidine biosynthesis bifunctional protein HisIE from Blochmanniella floridana.